The primary structure comprises 761 residues: Cyclin-D-binding Myb-like transcription factor 1 (761 aa).

The tract at residues M1–E237 is interaction with CCND2. The interval D24–H51 is disordered. A compositionally biased stretch (acidic residues) spans D37–T47. Residues V87–R170 form a required for transcriptional activation region. Positions V87 to M458 are required for DNA-binding. The interval G176–H761 is interaction with CCND1, CCND2 and CCND3. Residues G225–R263 form the Myb-like 1 domain. The HTH myb-type domain maps to K268–Q333. A DNA-binding region (H-T-H motif) is located at residues W306–L329. A Myb-like 2 domain is found at W339 to K388. Residues A459–H761 form a required for transcriptional activation region. 2 disordered regions span residues S584–Q625 and G740–H761.

It belongs to the DMTF1 family. As to quaternary structure, interacts with the D-type cyclins CCND1, CCND2 and CCND3. Interaction with D-type cyclins may modulate transcriptional activation by this protein. Phosphorylated by the cyclin-D2/CDK4, cyclin-D3/CDK4 and cyclin-D2/CDK6 complexes and to a lesser extent by the cyclin-D1/CDK4 complex. As to expression, ubiquitously expressed (at mRNA level). Expressed in brain, intestine, kidney, lung, pancreas, skin, spleen and tongue (at protein level). Expressed at high levels in testis and thymus (at protein level). In all tissues examined, expression is predominant in non-proliferating and differentiated cell types. These include epithelial, interstitial and smooth muscle cells of the intestine, differentiated spermatids, sperm and interstitial cells of the testis, and lymphoid cells of the medullary compartment of the thymus.

It localises to the nucleus. In terms of biological role, transcriptional activator which activates the CDKN2A/ARF locus in response to Ras-Raf signaling, thereby promoting p53/TP53-dependent growth arrest. May also cooperate with MYB to activate transcription of the ANPEP gene. Binds to the consensus sequence 5'-CCCG[GT]ATGT-3'. The polypeptide is Cyclin-D-binding Myb-like transcription factor 1 (Dmtf1) (Mus musculus (Mouse)).